The sequence spans 357 residues: Holliday junction branch migration complex subunit RuvB (357 aa).

The segment covering Met-1–Pro-15 has biased composition (low complexity). Residues Met-1–Ile-30 are disordered. The segment at Asp-13–Tyr-195 is large ATPase domain (RuvB-L). Residues Leu-34, Arg-35, Gly-76, Lys-79, Thr-80, Thr-81, Glu-142 to Phe-144, Arg-185, Tyr-195, and Arg-232 contribute to the ATP site. A Mg(2+)-binding site is contributed by Thr-80. A small ATPAse domain (RuvB-S) region spans residues Asn-196–Asp-266. A head domain (RuvB-H) region spans residues Pro-269–Lys-357. Residues Arg-305, Arg-324, and Arg-329 each coordinate DNA.

The protein belongs to the RuvB family. Homohexamer. Forms an RuvA(8)-RuvB(12)-Holliday junction (HJ) complex. HJ DNA is sandwiched between 2 RuvA tetramers; dsDNA enters through RuvA and exits via RuvB. An RuvB hexamer assembles on each DNA strand where it exits the tetramer. Each RuvB hexamer is contacted by two RuvA subunits (via domain III) on 2 adjacent RuvB subunits; this complex drives branch migration. In the full resolvosome a probable DNA-RuvA(4)-RuvB(12)-RuvC(2) complex forms which resolves the HJ.

The protein localises to the cytoplasm. It catalyses the reaction ATP + H2O = ADP + phosphate + H(+). In terms of biological role, the RuvA-RuvB-RuvC complex processes Holliday junction (HJ) DNA during genetic recombination and DNA repair, while the RuvA-RuvB complex plays an important role in the rescue of blocked DNA replication forks via replication fork reversal (RFR). RuvA specifically binds to HJ cruciform DNA, conferring on it an open structure. The RuvB hexamer acts as an ATP-dependent pump, pulling dsDNA into and through the RuvAB complex. RuvB forms 2 homohexamers on either side of HJ DNA bound by 1 or 2 RuvA tetramers; 4 subunits per hexamer contact DNA at a time. Coordinated motions by a converter formed by DNA-disengaged RuvB subunits stimulates ATP hydrolysis and nucleotide exchange. Immobilization of the converter enables RuvB to convert the ATP-contained energy into a lever motion, pulling 2 nucleotides of DNA out of the RuvA tetramer per ATP hydrolyzed, thus driving DNA branch migration. The RuvB motors rotate together with the DNA substrate, which together with the progressing nucleotide cycle form the mechanistic basis for DNA recombination by continuous HJ branch migration. Branch migration allows RuvC to scan DNA until it finds its consensus sequence, where it cleaves and resolves cruciform DNA. This Bordetella pertussis (strain Tohama I / ATCC BAA-589 / NCTC 13251) protein is Holliday junction branch migration complex subunit RuvB.